The primary structure comprises 294 residues: 33 kDa chaperonin (294 aa).

Cystine bridges form between Cys-239–Cys-241 and Cys-272–Cys-275.

The protein belongs to the HSP33 family. Post-translationally, under oxidizing conditions two disulfide bonds are formed involving the reactive cysteines. Under reducing conditions zinc is bound to the reactive cysteines and the protein is inactive.

Its subcellular location is the cytoplasm. Redox regulated molecular chaperone. Protects both thermally unfolding and oxidatively damaged proteins from irreversible aggregation. Plays an important role in the bacterial defense system toward oxidative stress. In Listeria monocytogenes serotype 4a (strain HCC23), this protein is 33 kDa chaperonin.